A 207-amino-acid polypeptide reads, in one-letter code: Small ribosomal subunit protein uS4 (207 aa).

Residues 22–54 form a disordered region; that stretch reads KSARRSISDKSKFESKPGQHGRTSGSRTSDFGL. The segment covering 27-38 has biased composition (basic and acidic residues); sequence SISDKSKFESKP. A compositionally biased stretch (polar residues) spans 42 to 52; that stretch reads GRTSGSRTSDF. Positions 97-157 constitute an S4 RNA-binding domain; sequence SRLDNVVYRM…EKSKKQLRII (61 aa).

The protein belongs to the universal ribosomal protein uS4 family. In terms of assembly, part of the 30S ribosomal subunit. Contacts protein S5. The interaction surface between S4 and S5 is involved in control of translational fidelity.

In terms of biological role, one of the primary rRNA binding proteins, it binds directly to 16S rRNA where it nucleates assembly of the body of the 30S subunit. With S5 and S12 plays an important role in translational accuracy. The polypeptide is Small ribosomal subunit protein uS4 (Leptothrix cholodnii (strain ATCC 51168 / LMG 8142 / SP-6) (Leptothrix discophora (strain SP-6))).